Reading from the N-terminus, the 431-residue chain is Tyrosine--tRNA ligase (431 aa).

Tyr34 lines the L-tyrosine pocket. The short motif at 39 to 48 (PTADSLHIGH) is the 'HIGH' region element. L-tyrosine contacts are provided by Tyr171 and Gln175. Positions 231–235 (KFGKT) match the 'KMSKS' region motif. Residue Lys234 coordinates ATP. The S4 RNA-binding domain maps to 353–422 (INVVEALVKT…GKYTILRRGK (70 aa)).

This sequence belongs to the class-I aminoacyl-tRNA synthetase family. TyrS type 1 subfamily. In terms of assembly, homodimer.

The protein localises to the cytoplasm. It carries out the reaction tRNA(Tyr) + L-tyrosine + ATP = L-tyrosyl-tRNA(Tyr) + AMP + diphosphate + H(+). Its function is as follows. Catalyzes the attachment of tyrosine to tRNA(Tyr) in a two-step reaction: tyrosine is first activated by ATP to form Tyr-AMP and then transferred to the acceptor end of tRNA(Tyr). This is Tyrosine--tRNA ligase from Neisseria meningitidis serogroup A / serotype 4A (strain DSM 15465 / Z2491).